A 405-amino-acid chain; its full sequence is Sesquiterpene synthase 16 (405 aa).

Mg(2+)-binding residues include Asp-155, Asp-159, and Glu-309. Positions 155–159 match the DDXXD motif motif; that stretch reads DDTYD.

This sequence belongs to the terpene synthase family. Tpsa subfamily. Mg(2+) is required as a cofactor. Requires Mn(2+) as cofactor.

Its pathway is secondary metabolite biosynthesis; terpenoid biosynthesis. Sesquiterpene synthase involved in the biosynthesis of volatile compounds. No activity detected with geranyl diphosphate (GPP) and farnesyl diphosphate (FPP) as substrates. The polypeptide is Sesquiterpene synthase 16 (Solanum habrochaites (Wild tomato)).